Consider the following 152-residue polypeptide: MSTPARKRLMRDFKRLQQDPPAGISGAPQDNNIMLWNAVIFGPDDTPWDGGTFKLSLQFSEDYPNKPPTVRFVSRMFHPNIYADGSICLDILQNQWSPIYDVAAILTSIQSLLCDPNPNSPANSEAARMFSESKREYNRRVREVVEQSWTAD.

A UBC core domain is found at 4–150; the sequence is PARKRLMRDF…VREVVEQSWT (147 aa). Cys88 serves as the catalytic Glycyl thioester intermediate.

The protein belongs to the ubiquitin-conjugating enzyme family. As to expression, expressed in all tissues examined. Lower levels found in leaves.

It carries out the reaction S-ubiquitinyl-[E1 ubiquitin-activating enzyme]-L-cysteine + [E2 ubiquitin-conjugating enzyme]-L-cysteine = [E1 ubiquitin-activating enzyme]-L-cysteine + S-ubiquitinyl-[E2 ubiquitin-conjugating enzyme]-L-cysteine.. Its pathway is protein modification; protein ubiquitination. Accepts the ubiquitin from the E1 complex and catalyzes its covalent attachment to other proteins. This chain is Ubiquitin-conjugating enzyme E2 2 (UBC2), found in Arabidopsis thaliana (Mouse-ear cress).